The sequence spans 234 residues: MPRRARARGGGGGGGEEVKVEDDFIDSVLNFGGGGGGEEDGDDGEEEQQQQQAAAAAMGKEFKSKNLEAERRRRGRLNGNIFALRAVVPKITKMSKEATLSDAIEHIKNLQNEVLELQRQLGDSPGEAWEKQCSASCSESFVPTENAHYQGQVELISLGSCKYNLKIFWTKRAGLFTKVLEALCSYKVQVLSLNTISFYGYAESFFTIEVKGEQDVVMVELRSLLSSIVEVPSI.

Residues 1–51 (MPRRARARGGGGGGGEEVKVEDDFIDSVLNFGGGGGGEEDGDDGEEEQQQQ) form a disordered region. The span at 37-48 (GEEDGDDGEEEQ) shows a compositional bias: acidic residues. The segment at 61–74 (EFKSKNLEAERRRR) is basic motif; degenerate. Positions 61-110 (EFKSKNLEAERRRRGRLNGNIFALRAVVPKITKMSKEATLSDAIEHIKNL) constitute a bHLH domain. The tract at residues 75–110 (GRLNGNIFALRAVVPKITKMSKEATLSDAIEHIKNL) is helix-loop-helix motif.

This sequence belongs to the bHLH protein family.

The protein resides in the nucleus. Functionally, transcription factor that plays a crucial role in tapetum development. Required for male fertility and pollen differentiation within the developing anther. Plays a major role in maintaining tapetum development, starting in early meiosis. Required for pollen mother cell meiosis. May regulate the anther-specific cysteine protease CP1 and lipid-transfer proteins C4 and C6. Required for anther development. Functions in parallel with GAMYB to regulate early anther development. Functions upstream of the transcription factor TDR and may positively regulate its transcription. This Oryza sativa subsp. japonica (Rice) protein is Transcription factor UDT1.